We begin with the raw amino-acid sequence, 249 residues long: Triosephosphate isomerase (249 aa).

9 to 11 (NWK) is a binding site for substrate. His-95 acts as the Electrophile in catalysis. Catalysis depends on Glu-166, which acts as the Proton acceptor. Residues Gly-172, Ser-211, and 232–233 (GG) contribute to the substrate site.

The protein belongs to the triosephosphate isomerase family. In terms of assembly, homodimer.

Its subcellular location is the cytoplasm. The enzyme catalyses D-glyceraldehyde 3-phosphate = dihydroxyacetone phosphate. Its pathway is carbohydrate biosynthesis; gluconeogenesis. It participates in carbohydrate degradation; glycolysis; D-glyceraldehyde 3-phosphate from glycerone phosphate: step 1/1. In terms of biological role, involved in the gluconeogenesis. Catalyzes stereospecifically the conversion of dihydroxyacetone phosphate (DHAP) to D-glyceraldehyde-3-phosphate (G3P). This chain is Triosephosphate isomerase, found in Legionella pneumophila (strain Paris).